The following is a 1890-amino-acid chain: DNA polymerase zeta catalytic subunit (1890 aa).

2 stretches are compositionally biased toward polar residues: residues 508–533 and 549–560; these read QENL…NLRT and PDSSTSNGASEN. 2 disordered regions span residues 508 to 565 and 922 to 942; these read QENL…FRRY and GDSN…DRGA. Residues 922–940 show a composition bias toward basic and acidic residues; sequence GDSNIDSEKQPLRDNHNDR. Zn(2+) is bound by residues Cys-1789, Cys-1792, Cys-1803, and Cys-1806. A CysA-type zinc finger spans residues 1789-1806; it reads CILCGEVVQESAQLCNRC. The [4Fe-4S] cluster site is built by Cys-1835, Cys-1838, Cys-1851, and Cys-1856. The CysB motif motif lies at 1835-1856; the sequence is CRHCGGGDWVVQSGVKCNSLAC.

Belongs to the DNA polymerase type-B family. Forms DNA polymerase zeta with REV7. [4Fe-4S] cluster serves as cofactor. In terms of tissue distribution, expressed in roots, leaves and flowers.

The protein resides in the nucleus. The catalysed reaction is DNA(n) + a 2'-deoxyribonucleoside 5'-triphosphate = DNA(n+1) + diphosphate. Its function is as follows. Catalytic subunit of the error prone DNA polymerase zeta. Involved in damage-tolerance mechanisms through translesion DNA synthesis. The polypeptide is DNA polymerase zeta catalytic subunit (REV3) (Arabidopsis thaliana (Mouse-ear cress)).